We begin with the raw amino-acid sequence, 469 residues long: Glutamate--tRNA ligase (469 aa).

Positions 9–19 (PSPTGFLHVGG) match the 'HIGH' region motif. 4 residues coordinate Zn(2+): Cys-98, Cys-100, Cys-125, and Asp-127. The short motif at 236–240 (KLSKR) is the 'KMSKS' region element. Lys-239 is an ATP binding site.

The protein belongs to the class-I aminoacyl-tRNA synthetase family. Glutamate--tRNA ligase type 1 subfamily. In terms of assembly, monomer. The cofactor is Zn(2+).

Its subcellular location is the cytoplasm. It carries out the reaction tRNA(Glu) + L-glutamate + ATP = L-glutamyl-tRNA(Glu) + AMP + diphosphate. In terms of biological role, catalyzes the attachment of glutamate to tRNA(Glu) in a two-step reaction: glutamate is first activated by ATP to form Glu-AMP and then transferred to the acceptor end of tRNA(Glu). The polypeptide is Glutamate--tRNA ligase (Shewanella sediminis (strain HAW-EB3)).